A 283-amino-acid chain; its full sequence is MLRYKAIVEYDGTNFVGWQRQQNGLSIQQLLEDKISTFTKQTVNLIAAGRTDAGVHALGQVVHFDLISPNNSKDLACINKETDNKEVSKQNNTTTTIDSLKMLPCRYNAYKLMSAVNYLLKPHRIILTSCEITTLQFHARFSAKARHYKYRIINRAVPSVIEQNRTWWIKTPLNVIDMIDASQHLIGKHDFTSFRSSACQAKSPLKTLTKIEVDTTNYPEIQIYFSAPSFLHHMVRNIVGTLVYIGLCKISPAAIKTILFAKNRAMAGPTAPSSGLYFVKVDY.

The active-site Nucleophile is aspartate 52. Substrate is bound at residue tyrosine 148.

This sequence belongs to the tRNA pseudouridine synthase TruA family. In terms of assembly, homodimer.

It catalyses the reaction uridine(38/39/40) in tRNA = pseudouridine(38/39/40) in tRNA. Formation of pseudouridine at positions 38, 39 and 40 in the anticodon stem and loop of transfer RNAs. The polypeptide is tRNA pseudouridine synthase A (Orientia tsutsugamushi (strain Ikeda) (Rickettsia tsutsugamushi)).